Here is a 344-residue protein sequence, read N- to C-terminus: Beta-1,4-galactosyltransferase 4 (344 aa).

The Cytoplasmic segment spans residues 1–12; that stretch reads MGFNLTFHLSYK. A helical; Signal-anchor for type II membrane protein membrane pass occupies residues 13–38; the sequence is FRLLLLLTLCLTVVGWATSNYFVGAI. The Lumenal portion of the chain corresponds to 39–344; it reads QEIPKAKEFM…NITVDFWFGA (306 aa). A disulfide bond links Cys-77 and Cys-118. Residues 129-133, 168-170, and 195-196 contribute to the UDP-alpha-D-galactose site; these read PHRNR, FNR, and VD. Cys-189 and Cys-208 form a disulfide bridge. Asp-196 is a binding site for Mn(2+). Asn-220 carries an N-linked (GlcNAc...) asparagine glycan. UDP-alpha-D-galactose contacts are provided by Tyr-224 and Trp-256. Residue 258-261 coordinates N-acetyl-D-glucosamine; the sequence is GEDD. His-289 contacts Mn(2+). 289-291 serves as a coordination point for UDP-alpha-D-galactose; the sequence is HTR. Arg-301 contacts N-acetyl-D-glucosamine. Asn-335 carries an N-linked (GlcNAc...) asparagine glycan.

This sequence belongs to the glycosyltransferase 7 family. As to quaternary structure, interacts with SLC35A2 (isoform 2; UGT1). The cofactor is Mn(2+). Post-translationally, N-glycosylated. Highest expression is observed in placenta, pancreas, kidney and heart. Expressed in corneal epithelial cells.

It is found in the golgi apparatus membrane. Its subcellular location is the secreted. The catalysed reaction is N-acetyl-D-glucosamine + UDP-alpha-D-galactose = beta-D-galactosyl-(1-&gt;4)-N-acetyl-D-glucosamine + UDP + H(+). It catalyses the reaction a beta-D-GlcNAc-(1-&gt;3)-beta-D-Gal-(1-&gt;4)-beta-D-Glc-(1&lt;-&gt;1)-Cer(d18:1(4E)) + UDP-alpha-D-galactose = a neolactoside nLc4Cer(d18:1(4E)) + UDP + H(+). The enzyme catalyses 3-O-{beta-D-galactosyl-(1-&gt;3)-[6-O-sulfo-N-acetyl-beta-D-glucosaminyl-(1-&gt;6)]-N-acetyl-alpha-D-galactosaminyl}-L-seryl-[protein] + UDP-alpha-D-galactose = 3-O-{beta-D-galactosyl-(1-&gt;3)-[beta-D-galactosyl-(1-&gt;4)-6-O-sulfo-N-acetyl-beta-D-glucosaminyl-(1-&gt;6)]-N-acetyl-alpha-D-galactosaminyl}-L-seryl-[protein] + UDP + H(+). It carries out the reaction 3-O-{beta-D-galactosyl-(1-&gt;3)-[6-O-sulfo-N-acetyl-beta-D-glucosaminyl-(1-&gt;6)]-N-acetyl-alpha-D-galactosaminyl}-L-threonyl-[protein] + UDP-alpha-D-galactose = 3-O-{beta-D-galactosyl-(1-&gt;3)-[beta-D-galactosyl-(1-&gt;4)-6-O-sulfo-N-acetyl-beta-D-glucosaminyl-(1-&gt;6)]-N-acetyl-alpha-D-galactosaminyl}-L-threonyl-[protein] + UDP + H(+). It participates in protein modification; protein glycosylation. The protein operates within glycolipid biosynthesis. With respect to regulation, up-regulated by LALBA. Its function is as follows. Galactose (Gal) transferase involved in the synthesis of terminal N-acetyllactosamine (LacNac) unit present on glycan chains of glycoproteins and glycosphingolipids. Catalyzes the transfer of Gal residue via a beta1-&gt;4 linkage from UDP-Gal to the non-reducing terminal N-acetyl glucosamine 6-O-sulfate (6-O-sulfoGlcNAc) in the linearly growing chain of both N- and O-linked keratan sulfate proteoglycans. Cooperates with B3GNT7 N-acetyl glucosamine transferase and CHST6 and CHST1 sulfotransferases to construct and elongate mono- and disulfated disaccharide units [-&gt;3Galbeta1-&gt;4(6-sulfoGlcNAcbeta)1-&gt;] and [-&gt;3(6-sulfoGalbeta)1-&gt;4(6-sulfoGlcNAcbeta)1-&gt;] within keratan sulfate polymer. Transfers Gal residue via a beta1-&gt;4 linkage to terminal 6-O-sulfoGlcNAc within the LacNac unit of core 2 O-glycans forming 6-sulfo-sialyl-Lewis X (sLex). May contribute to the generation of sLex epitope on mucin-type glycoproteins that serve as ligands for SELL/L-selectin, a major regulator of leukocyte migration. In the biosynthesis pathway of neolacto-series glycosphingolipids, transfers Gal residue via a beta1-&gt;4 linkage to terminal GlcNAc of a lactotriaosylceramide (Lc3Cer) acceptor to form a neolactotetraosylceramide. This is Beta-1,4-galactosyltransferase 4 from Homo sapiens (Human).